The following is a 119-amino-acid chain: Ribonuclease P protein component (119 aa).

This sequence belongs to the RnpA family. Consists of a catalytic RNA component (M1 or rnpB) and a protein subunit.

The catalysed reaction is Endonucleolytic cleavage of RNA, removing 5'-extranucleotides from tRNA precursor.. In terms of biological role, RNaseP catalyzes the removal of the 5'-leader sequence from pre-tRNA to produce the mature 5'-terminus. It can also cleave other RNA substrates such as 4.5S RNA. The protein component plays an auxiliary but essential role in vivo by binding to the 5'-leader sequence and broadening the substrate specificity of the ribozyme. This chain is Ribonuclease P protein component, found in Listeria welshimeri serovar 6b (strain ATCC 35897 / DSM 20650 / CCUG 15529 / CIP 8149 / NCTC 11857 / SLCC 5334 / V8).